The chain runs to 256 residues: Small ribosomal subunit protein uS2 (256 aa).

The protein belongs to the universal ribosomal protein uS2 family.

The sequence is that of Small ribosomal subunit protein uS2 from Methylococcus capsulatus (strain ATCC 33009 / NCIMB 11132 / Bath).